The primary structure comprises 346 residues: MNPHATPVLVLSLALGTTITISSNHWVLAWTGLEINTLAIIPLISKSHHPRAVEAATKYFLTQAAASALVLFSSMTNAWATGQWDITQLNHPTSCLLLTAAIAIKLGLVPFHFWFPEVLQGSPLMTALLLSTLMKFPPLTLLLMTSKSLNPALLTTMALASAALGGWMGLNQTQTRKILAFSSISHLGWIAIILVYSPKLALLTFYLYTIMTSAVFMALNKIKALNLSMVLTSWTKTPVLNATLMLVLLSLAGLPPLTGFMPKWLIIQELTKQEMTPAAMAIAMLSLLSLFFYLRLAYHSTITLPPNSSNHMKQWYTSKPPSTPTAILASLSILLLPLSPMIHAIV.

Transmembrane regions (helical) follow at residues 1–21 (MNPH…TITI), 25–45 (HWVL…PLIS), 60–80 (FLTQ…NAWA), 95–115 (CLLL…HFWF), 124–144 (LMTA…LLLM), 149–169 (LNPA…GWMG), 178–195 (ILAF…IILV), 200–219 (LALL…FMAL), 242–262 (ATLM…GFMP), 274–294 (EMTP…FFYL), and 326–346 (AILA…HAIV).

Belongs to the complex I subunit 2 family.

It is found in the mitochondrion inner membrane. The catalysed reaction is a ubiquinone + NADH + 5 H(+)(in) = a ubiquinol + NAD(+) + 4 H(+)(out). Functionally, core subunit of the mitochondrial membrane respiratory chain NADH dehydrogenase (Complex I) that is believed to belong to the minimal assembly required for catalysis. Complex I functions in the transfer of electrons from NADH to the respiratory chain. The immediate electron acceptor for the enzyme is believed to be ubiquinone. In Mareca americana (American wigeon), this protein is NADH-ubiquinone oxidoreductase chain 2 (MT-ND2).